We begin with the raw amino-acid sequence, 143 residues long: Nucleoside diphosphate kinase (143 aa).

Positions 11, 59, 87, 93, 104, and 114 each coordinate ATP. Residue histidine 117 is the Pros-phosphohistidine intermediate of the active site.

It belongs to the NDK family. In terms of assembly, homotetramer. Mg(2+) is required as a cofactor.

It localises to the cytoplasm. It catalyses the reaction dZDP + ATP = dZTP + ADP. It carries out the reaction a 2'-deoxyribonucleoside 5'-diphosphate + ATP = a 2'-deoxyribonucleoside 5'-triphosphate + ADP. The enzyme catalyses a ribonucleoside 5'-diphosphate + ATP = a ribonucleoside 5'-triphosphate + ADP. It participates in purine metabolism. Major role in the synthesis of nucleoside triphosphates other than ATP. The ATP gamma phosphate is transferred to the NDP beta phosphate via a ping-pong mechanism, using a phosphorylated active-site intermediate. Functionally, (Microbial infection) Catalyzes the phosphorylation of dZDP to dZTP, when the bacterium is infected by a phage that produces the substrate for the synthesis of dZTP (2- amino-2'-deoxyadenosine 5'-triphosphate), which is then used by the phage as a DNA polymerase substrate. The chain is Nucleoside diphosphate kinase from Salmonella paratyphi C (strain RKS4594).